The chain runs to 283 residues: Elongation factor Ts (283 aa).

The involved in Mg(2+) ion dislocation from EF-Tu stretch occupies residues 79-82; the sequence is TDFV.

The protein belongs to the EF-Ts family.

Its subcellular location is the cytoplasm. Its function is as follows. Associates with the EF-Tu.GDP complex and induces the exchange of GDP to GTP. It remains bound to the aminoacyl-tRNA.EF-Tu.GTP complex up to the GTP hydrolysis stage on the ribosome. The protein is Elongation factor Ts of Shewanella putrefaciens (strain CN-32 / ATCC BAA-453).